The sequence spans 143 residues: Endoribonuclease YbeY (143 aa).

Residues histidine 113, histidine 117, and aspartate 123 each contribute to the Zn(2+) site.

The protein belongs to the endoribonuclease YbeY family. Requires Zn(2+) as cofactor.

Its subcellular location is the cytoplasm. In terms of biological role, single strand-specific metallo-endoribonuclease involved in late-stage 70S ribosome quality control and in maturation of the 3' terminus of the 16S rRNA. The sequence is that of Endoribonuclease YbeY from Elusimicrobium minutum (strain Pei191).